The chain runs to 277 residues: UPF0276 protein PSEEN3355 (277 aa).

It belongs to the UPF0276 family.

This Pseudomonas entomophila (strain L48) protein is UPF0276 protein PSEEN3355.